Here is a 219-residue protein sequence, read N- to C-terminus: Putative zinc metalloprotease YwhC (219 aa).

A helical transmembrane segment spans residues Phe4–Thr24. Zn(2+) is bound at residue His26. Glu27 is an active-site residue. His30 contributes to the Zn(2+) binding site. 4 consecutive transmembrane segments (helical) span residues Pro52–Ala72, Ile94–Met114, Phe132–Pro152, and Phe180–Leu200.

The protein belongs to the peptidase M50B family. The cofactor is Zn(2+).

Its subcellular location is the cell membrane. The chain is Putative zinc metalloprotease YwhC (ywhC) from Bacillus subtilis (strain 168).